Consider the following 507-residue polypeptide: ATP synthase subunit alpha, mitochondrial (507 aa).

171 to 178 (GDRQTGKT) provides a ligand contact to ATP.

It belongs to the ATPase alpha/beta chains family. As to quaternary structure, F-type ATPases have 2 components, CF(1) - the catalytic core - and CF(0) - the membrane proton channel. CF(1) has five subunits: alpha(3), beta(3), gamma(1), delta(1), epsilon(1). CF(0) has three main subunits: a, b and c.

Its subcellular location is the mitochondrion. The protein localises to the mitochondrion inner membrane. Its function is as follows. Mitochondrial membrane ATP synthase (F(1)F(0) ATP synthase or Complex V) produces ATP from ADP in the presence of a proton gradient across the membrane which is generated by electron transport complexes of the respiratory chain. F-type ATPases consist of two structural domains, F(1) - containing the extramembraneous catalytic core, and F(0) - containing the membrane proton channel, linked together by a central stalk and a peripheral stalk. During catalysis, ATP synthesis in the catalytic domain of F(1) is coupled via a rotary mechanism of the central stalk subunits to proton translocation. Subunits alpha and beta form the catalytic core in F(1). Rotation of the central stalk against the surrounding alpha(3)beta(3) subunits leads to hydrolysis of ATP in three separate catalytic sites on the beta subunits. Subunit alpha does not bear the catalytic high-affinity ATP-binding sites. This Arabidopsis thaliana (Mouse-ear cress) protein is ATP synthase subunit alpha, mitochondrial (ATPA).